Here is a 241-residue protein sequence, read N- to C-terminus: MDGWSDLSSAPPQYREVAGIADWALLAQGLGWSINYLAMIYHSYKDRTYGMAILPLCCNFAWEFVYSVIYPSHNSAERAVLTTWMILNLFVMYTAIKFAPNEWQHAPLVRQCLPWIFPVAIAAFTAGHLALAATVGVSKAANWGAFLCFELLTSGAVCQLMSRGSSRGASYTIWLSRFLGSYIGGIFLHVRETHWPQEFGWISHPFVTWHGLMCFSLDIAYVTFLWRIRRQEHRSQRKKAL.

Helical transmembrane passes span 20–40 (IADWALLAQGLGWSINYLAMI), 49–69 (YGMAILPLCCNFAWEFVYSVI), 79–99 (AVLTTWMILNLFVMYTAIKFA), 113–133 (LPWIFPVAIAAFTAGHLALAA), 141–161 (ANWGAFLCFELLTSGAVCQLM), 168–188 (GASYTIWLSRFLGSYIGGIFL), and 206–226 (FVTWHGLMCFSLDIAYVTFLW).

This sequence belongs to the paxB family.

It localises to the membrane. It catalyses the reaction 2-oxo-3-[(8S)-epoxy-(2E,6E)-farnesyl]-6-(pyridin-3-yl)-2H-pyran-4-olate + H(+) = deacetylpyripyropene E. Its pathway is secondary metabolite biosynthesis; terpenoid biosynthesis. Its function is as follows. Terpene cyclase; part of the gene cluster that mediates the biosynthesis of pyripyropene A, a specific human acyl-coenzyme A:cholesterol acyltransferase 2 inhibitor. The first step of the pathway is the synthesis of nicotinyl-CoA from nicotinic acid by the nicotinic acid-CoA ligase pyr1. Nicotinyl-CoA is then a substrate of polyketide synthase pyr2 to produce 4-hydroxy-6-(3-pyridinyl)-2H-pyran-2-one (HPPO) which is further prenylated by the polyprenyl transferase pyr6 to yield farnesyl-HPPO. The next steps consist of an epoxidation of farnesyl-HPPO to epoxyfarnesyl-HPPO by FAD-dependent monooxygenase pyr5 and a cyclization of the terpenoid portion by the terpene cyclase pyr4 to yield deacetyl-pyripyropene E. The 2 cytochrome P450 monooxygenases pyr3 and pyr9, and the 2 acetyltransferases pyr7 and pyr8 are involved in the conversion of deacetyl-pyripyropene E into pyripyropene A through several cycles of oxidation and acetylation steps. Pyr7 acetylates deacetyl-pyripyropene E to pyripyropene E which is oxidized to 11-deacetyl-pyripyropene O by pyr3, which is in turn acetylated into pyripyropene O by pyr8. Pyripyropene O is then oxidized to deacetyl-pyripyropene A by pyr9. Deacetyl-pyripyropene A is finally acetylated to pyripyropene A by pyr8. In Aspergillus fumigatus (strain ATCC MYA-4609 / CBS 101355 / FGSC A1100 / Af293) (Neosartorya fumigata), this protein is Terpene cyclase pyr4.